The sequence spans 177 residues: Bifunctional protein PyrR (177 aa).

The PRPP-binding signature appears at Ile-98–Thr-110.

Belongs to the purine/pyrimidine phosphoribosyltransferase family. PyrR subfamily. As to quaternary structure, homodimer and homohexamer; in equilibrium.

It carries out the reaction UMP + diphosphate = 5-phospho-alpha-D-ribose 1-diphosphate + uracil. Regulates transcriptional attenuation of the pyrimidine nucleotide (pyr) operon by binding in a uridine-dependent manner to specific sites on pyr mRNA. This disrupts an antiterminator hairpin in the RNA and favors formation of a downstream transcription terminator, leading to a reduced expression of downstream genes. Its function is as follows. Also displays a weak uracil phosphoribosyltransferase activity which is not physiologically significant. This chain is Bifunctional protein PyrR, found in Clostridium kluyveri (strain ATCC 8527 / DSM 555 / NBRC 12016 / NCIMB 10680 / K1).